Reading from the N-terminus, the 209-residue chain is Ribosomal RNA large subunit methyltransferase E (209 aa).

Gly63, Trp65, Asp83, Asp99, and Asp124 together coordinate S-adenosyl-L-methionine. Catalysis depends on Lys164, which acts as the Proton acceptor.

Belongs to the class I-like SAM-binding methyltransferase superfamily. RNA methyltransferase RlmE family.

It is found in the cytoplasm. It carries out the reaction uridine(2552) in 23S rRNA + S-adenosyl-L-methionine = 2'-O-methyluridine(2552) in 23S rRNA + S-adenosyl-L-homocysteine + H(+). Specifically methylates the uridine in position 2552 of 23S rRNA at the 2'-O position of the ribose in the fully assembled 50S ribosomal subunit. The protein is Ribosomal RNA large subunit methyltransferase E of Shewanella putrefaciens (strain CN-32 / ATCC BAA-453).